We begin with the raw amino-acid sequence, 442 residues long: Syndecan-3 (442 aa).

2 disordered regions span residues 1–25 (MKPG…APGA) and 47–80 (RWRN…YSGS). The N-terminal stretch at 1–44 (MKPGPPRRGTAQGQRVDTATHAPGARGLLLPPLLLLLLAGRAAG) is a signal peptide. Residues 45–387 (AQRWRNENFE…SILERKEVLV (343 aa)) are Extracellular-facing. A compositionally biased stretch (basic and acidic residues) spans 48–58 (WRNENFERPVD). The span at 61–75 (GSGDDDSFPDDELDD) shows a compositional bias: acidic residues. S78, S80, S82, and S89 each carry an O-linked (Xyl...) (glycosaminoglycan) serine glycan. O-linked (GalNAc) threonine; by GALNT13 glycosylation occurs at T107. 3 disordered regions span residues 152–199 (ESSQ…PATA), 253–293 (ATSR…AQTP), and 305–327 (EPEV…TTQP). Composition is skewed to low complexity over residues 157 to 199 (ATTI…PATA) and 276 to 287 (TLPLGTTAPGPT). An O-linked (GalNAc) serine; by GALNT13 glycan is attached at S161. T162, T163, T170, and T172 each carry an O-linked (GalNAc) threonine; by GALNT13 glycan. 2 O-linked (Xyl...) (glycosaminoglycan) serine glycosylation sites follow: S315 and S367. The chain crosses the membrane as a helical span at residues 388 to 408 (AVIVGGVVGALFAAFLVTLLI). Phosphotyrosine occurs at positions 409, 419, 431, and 441. The Cytoplasmic segment spans residues 409 to 442 (YRMKKKDEGSYTLEEPKQASVTYQKPDKQEEFYA). The disordered stretch occupies residues 419–442 (YTLEEPKQASVTYQKPDKQEEFYA). Residues 433–442 (KPDKQEEFYA) show a composition bias toward basic and acidic residues.

This sequence belongs to the syndecan proteoglycan family. As to quaternary structure, interacts with TIAM1. Interacts with PTN (via heparan sulfate chains); this interaction mediates the neurite outgrowth-promoting signal from PTN to the cytoskeleton of growing neurites; this interaction mediates osteoblast recruitment. Interacts with MDK; this interaction induces SDC3 clustering; this interaction induces neuronal cell adhesion and neurite outgrowth. Post-translationally, O-glycosylated within the Thr/Ser-rich region which could interact with lectin domains on other molecules.

It localises to the cell membrane. Its function is as follows. Cell surface proteoglycan that may bear heparan sulfate. May have a role in the organization of cell shape by affecting the actin cytoskeleton, possibly by transferring signals from the cell surface in a sugar-dependent mechanism. This chain is Syndecan-3 (Sdc3), found in Mus musculus (Mouse).